Reading from the N-terminus, the 198-residue chain is tRNA (pseudouridine(54)-N(1))-methyltransferase (198 aa).

Residues Leu130, Gly153, 176-181, and Cys186 contribute to the S-adenosyl-L-methionine site; that span reads LSPLEL.

Belongs to the methyltransferase superfamily. TrmY family. As to quaternary structure, homodimer.

The protein resides in the cytoplasm. The catalysed reaction is pseudouridine(54) in tRNA + S-adenosyl-L-methionine = N(1)-methylpseudouridine(54) in tRNA + S-adenosyl-L-homocysteine + H(+). Functionally, specifically catalyzes the N1-methylation of pseudouridine at position 54 (Psi54) in tRNAs. The chain is tRNA (pseudouridine(54)-N(1))-methyltransferase from Methanococcus vannielii (strain ATCC 35089 / DSM 1224 / JCM 13029 / OCM 148 / SB).